The primary structure comprises 228 residues: Ankyrin repeat domain-containing protein 46 (228 aa).

ANK repeat units follow at residues 11–40 (QTNVPLLQACIDGDFTYSKRLLESGFDPNI), 44–74 (RGRTGLHLAAARGNVDICQLLHKFGADPLAT), 77–103 (QGNTALHLCGHVDTIQFLVSNGLKIDI), and 107–138 (QGATPLVLAKRRGVNKDVIRLLESLEEQEVKG). Residues 195–215 (VLLLILVIALLSLGIAYYVSG) form a helical membrane-spanning segment.

Its subcellular location is the membrane. The protein is Ankyrin repeat domain-containing protein 46 (Ankrd46) of Mus musculus (Mouse).